Consider the following 374-residue polypeptide: Carbamoyl phosphate synthase small chain (374 aa).

A CPSase region spans residues 1–183 (MVLADGQMIW…QNGYSVVDNQ (183 aa)). Residues Ser-41, Gly-235, and Gly-237 each coordinate L-glutamine. Residues 187–374 (HVVAIDYGLK…FIDLIAKERP (188 aa)) enclose the Glutamine amidotransferase type-1 domain. Residue Cys-264 is the Nucleophile of the active site. Residues Leu-265, Gln-268, Asn-306, Gly-308, and Phe-309 each coordinate L-glutamine. Catalysis depends on residues His-348 and Glu-350.

This sequence belongs to the CarA family. In terms of assembly, composed of two chains; the small (or glutamine) chain promotes the hydrolysis of glutamine to ammonia, which is used by the large (or ammonia) chain to synthesize carbamoyl phosphate. Tetramer of heterodimers (alpha,beta)4.

It catalyses the reaction hydrogencarbonate + L-glutamine + 2 ATP + H2O = carbamoyl phosphate + L-glutamate + 2 ADP + phosphate + 2 H(+). The catalysed reaction is L-glutamine + H2O = L-glutamate + NH4(+). The protein operates within amino-acid biosynthesis; L-arginine biosynthesis; carbamoyl phosphate from bicarbonate: step 1/1. Its pathway is pyrimidine metabolism; UMP biosynthesis via de novo pathway; (S)-dihydroorotate from bicarbonate: step 1/3. Small subunit of the glutamine-dependent carbamoyl phosphate synthetase (CPSase). CPSase catalyzes the formation of carbamoyl phosphate from the ammonia moiety of glutamine, carbonate, and phosphate donated by ATP, constituting the first step of 2 biosynthetic pathways, one leading to arginine and/or urea and the other to pyrimidine nucleotides. The small subunit (glutamine amidotransferase) binds and cleaves glutamine to supply the large subunit with the substrate ammonia. The chain is Carbamoyl phosphate synthase small chain from Zymomonas mobilis subsp. mobilis (strain ATCC 31821 / ZM4 / CP4).